A 478-amino-acid polypeptide reads, in one-letter code: tRNA modification GTPase MnmE (478 aa).

Positions 25, 82, and 135 each coordinate (6S)-5-formyl-5,6,7,8-tetrahydrofolate. The TrmE-type G domain occupies 231-400 (GIKVVIAGQP…LREQLLRVVG (170 aa)). K(+) is bound at residue asparagine 241. GTP contacts are provided by residues 241–246 (NVGKSS), 260–266 (TPVAGTT), and 285–288 (DTAG). Serine 245 provides a ligand contact to Mg(2+). The K(+) site is built by threonine 260, valine 262, and threonine 265. A Mg(2+)-binding site is contributed by threonine 266. Residue lysine 478 coordinates (6S)-5-formyl-5,6,7,8-tetrahydrofolate.

It belongs to the TRAFAC class TrmE-Era-EngA-EngB-Septin-like GTPase superfamily. TrmE GTPase family. As to quaternary structure, homodimer. Heterotetramer of two MnmE and two MnmG subunits. K(+) serves as cofactor.

It localises to the cytoplasm. Its function is as follows. Exhibits a very high intrinsic GTPase hydrolysis rate. Involved in the addition of a carboxymethylaminomethyl (cmnm) group at the wobble position (U34) of certain tRNAs, forming tRNA-cmnm(5)s(2)U34. This Polaromonas naphthalenivorans (strain CJ2) protein is tRNA modification GTPase MnmE.